Consider the following 214-residue polypeptide: Adenylate kinase (214 aa).

15-20 (GAGKGT) provides a ligand contact to ATP. Residues 35-64 (ASGDLFREAIKNQSVIGRKIAAIISQGGYV) are NMP. Residues serine 36, arginine 41, 62 to 64 (GYV), 90 to 93 (GYPR), and glutamine 97 contribute to the AMP site. The segment at 127 to 164 (NRVICNNCNSVYNLLFQKPLVENSCDQCSAKLVKRSDD) is LID. Arginine 128 is an ATP binding site. Residues cysteine 131 and cysteine 134 each coordinate Zn(2+). Position 137-138 (137-138 (VY)) interacts with ATP. The Zn(2+) site is built by cysteine 151 and cysteine 154. AMP-binding residues include arginine 161 and arginine 172. An ATP-binding site is contributed by leucine 200.

The protein belongs to the adenylate kinase family. As to quaternary structure, monomer.

It localises to the cytoplasm. The enzyme catalyses AMP + ATP = 2 ADP. Its pathway is purine metabolism; AMP biosynthesis via salvage pathway; AMP from ADP: step 1/1. Catalyzes the reversible transfer of the terminal phosphate group between ATP and AMP. Plays an important role in cellular energy homeostasis and in adenine nucleotide metabolism. This Mycoplasma genitalium (strain ATCC 33530 / DSM 19775 / NCTC 10195 / G37) (Mycoplasmoides genitalium) protein is Adenylate kinase.